We begin with the raw amino-acid sequence, 471 residues long: Ribulose bisphosphate carboxylase large chain (471 aa).

Positions 115 and 165 each coordinate substrate. The Proton acceptor role is filled by Lys-167. Lys-169 serves as a coordination point for substrate. Positions 193, 195, and 196 each coordinate Mg(2+). Lys-193 carries the post-translational modification N6-carboxylysine. Catalysis depends on His-286, which acts as the Proton acceptor. Substrate is bound by residues Arg-287, His-319, and Ser-371.

The protein belongs to the RuBisCO large chain family. Type I subfamily. In terms of assembly, heterohexadecamer of 8 large chains and 8 small chains. Mg(2+) serves as cofactor.

The protein localises to the carboxysome. The enzyme catalyses 2 (2R)-3-phosphoglycerate + 2 H(+) = D-ribulose 1,5-bisphosphate + CO2 + H2O. It carries out the reaction D-ribulose 1,5-bisphosphate + O2 = 2-phosphoglycolate + (2R)-3-phosphoglycerate + 2 H(+). Its function is as follows. RuBisCO catalyzes two reactions: the carboxylation of D-ribulose 1,5-bisphosphate, the primary event in carbon dioxide fixation, as well as the oxidative fragmentation of the pentose substrate in the photorespiration process. Both reactions occur simultaneously and in competition at the same active site. This Prochlorococcus marinus (strain MIT 9301) protein is Ribulose bisphosphate carboxylase large chain.